The following is a 429-amino-acid chain: MSEKSATVTFGGKSADLPVRSGSIGPDVVDIGSLYKQTTMFTYDPGFTSTASCESKITYIDGDEGVLLHRGFPIEQLAEHGDFLEVCYLLLYGELPTKAQKADFDYRVTHHTMVHEQMSRFFTGFRRDAHPMAVMCGCVGALSAFYHDSTDITDPHQRMVASLRMIAKMPTIAAMAYKYHIGQPFVYPKNDLDYASNFLRMCFAVPCEEYVVNPVLARAMDRIFILHADHEQNASTSTVRLAGSSGANPFACIAAGIACLWGPAHGGANEAALNMLAEIGTVDRIPEYITKAKDKNDPFRLMGFGHRVYKNYDPRAKIMQKTTHEVLAELGHKDDPLLEVAMELERIALTDEYFIEKKLYPNIDFYSGITLKALGFPTTMFTVLFALARTVGWIAQWNEMIEDPEQRIGRPRQLYVGAPLRDYVPISKR.

Residues His306 and Asp364 contribute to the active site.

Belongs to the citrate synthase family.

It catalyses the reaction oxaloacetate + acetyl-CoA + H2O = citrate + CoA + H(+). The protein operates within carbohydrate metabolism; tricarboxylic acid cycle; isocitrate from oxaloacetate: step 1/2. In Rhizobium meliloti (strain 1021) (Ensifer meliloti), this protein is Citrate synthase (gltA).